The sequence spans 84 residues: Neurotoxin BM10-1-like (84 aa).

Positions 1-21 are cleaved as a signal peptide; that stretch reads MKTLLLTLVVVTIVCLDLGYT. Intrachain disulfides connect Cys-24-Cys-47, Cys-27-Cys-32, Cys-40-Cys-64, Cys-68-Cys-76, and Cys-77-Cys-82.

The protein belongs to the three-finger toxin family. Ancestral subfamily. Orphan group IV sub-subfamily. As to expression, expressed by the venom gland.

It localises to the secreted. Functionally, binds and inhibits muscular and neuronal nicotinic acetylcholine receptors (nAChR). The sequence is that of Neurotoxin BM10-1-like from Bungarus multicinctus (Many-banded krait).